A 667-amino-acid polypeptide reads, in one-letter code: Leucine zipper putative tumor suppressor 2 (667 aa).

The span at 1 to 25 (MAIVQTLPVPLEPAPEAATAQQAPA) shows a compositional bias: low complexity. 3 disordered regions span residues 1 to 132 (MAIV…PVSG), 150 to 325 (PVLP…DEAL), and 516 to 541 (QEAE…PPVP). The interval 1–333 (MAIVQTLPVP…ALLHCVLEGK (333 aa)) is required for centrosomal localization. A compositionally biased stretch (polar residues) spans 172-181 (PSGSQGSLTQ). Residues 187–198 (ASSSSSSSSSAA) show a composition bias toward low complexity. The segment covering 212–232 (PSGTLSDSGRNSLSSLPTYST) has biased composition (polar residues). Residues 241–282 (SPGGHLPSHGPGRGALPGPARGAPTGPSHSDSGRSSSSKSTG) show a composition bias toward low complexity. S248 is subject to Phosphoserine. Gly residues predominate over residues 283-294 (SLGGRLAGGLLG). The residue at position 295 (S295) is a Phosphoserine. A compositionally biased stretch (pro residues) spans 310–321 (SPPPPPPPPPPS). The stretch at 329 to 647 (VLEGKLRDRE…LELEARELAD (319 aa)) forms a coiled coil. The interval 445–667 (SGEISLLKQQ…CLEEITATEI (223 aa)) is sufficient for interaction with CTNNB1. Positions 448–667 (ISLLKQQLKE…CLEEITATEI (220 aa)) are sufficient for interaction with KATNB1 and for inhibition of katanin-mediated microtubule severing. Positions 516–526 (QEAERLREKAG) are enriched in basic and acidic residues. Residue S568 is modified to Phosphoserine. Positions 629–638 (LEQELQQLSL) match the Nuclear export signal motif.

It belongs to the LZTS2 family. Interacts with KATNB1. Also interacts with CTNNB1, gamma-tubulin and KIF23.

The protein localises to the cytoplasm. The protein resides in the cytoskeleton. It is found in the microtubule organizing center. It localises to the centrosome. In terms of biological role, negative regulator of katanin-mediated microtubule severing and release from the centrosome. Required for central spindle formation and the completion of cytokinesis. May negatively regulate axonal outgrowth by preventing the formation of microtubule bundles that are necessary for transport within the elongating axon. Negative regulator of the Wnt signaling pathway. Represses beta-catenin-mediated transcriptional activation by promoting the nuclear exclusion of beta-catenin. This is Leucine zipper putative tumor suppressor 2 from Bos taurus (Bovine).